The primary structure comprises 189 residues: Streptothricin acetyltransferase (189 aa).

Residues 44–189 enclose the N-acetyltransferase domain; that stretch reads FALREVPADP…HALYMSMPCP (146 aa). The interval 55 to 76 is disordered; sequence LVKVFPDDGGSDGEDGAEGEDA. Positions 63-75 are enriched in acidic residues; sequence GGSDGEDGAEGED.

It belongs to the acetyltransferase family. GNAT subfamily.

The catalysed reaction is streptothricin F + acetyl-CoA = N(beta)-acetylstreptothricin F + CoA + H(+). In terms of biological role, involved in resistance to streptothricin, a broad-spectrum antibiotic produced by streptomycetes. Detoxifies streptothricin via acetylation of the beta amino group of the first beta-lysyl moiety of streptothricin. This Streptomyces lavendulae protein is Streptothricin acetyltransferase.